The primary structure comprises 362 residues: Probable cinnamyl alcohol dehydrogenase 9 (362 aa).

Cysteine 45 is a binding site for Zn(2+). Residue serine 47 participates in NADP(+) binding. The Zn(2+) site is built by histidine 67, glutamate 68, cysteine 98, cysteine 101, cysteine 104, cysteine 112, and cysteine 167. NADP(+) is bound by residues threonine 171, 192–197 (GLGGLG), 215–220 (STSPWK), threonine 255, glycine 279, and 302–304 (SMI).

It belongs to the zinc-containing alcohol dehydrogenase family. As to quaternary structure, homodimer. The cofactor is Zn(2+).

The catalysed reaction is (E)-cinnamyl alcohol + NADP(+) = (E)-cinnamaldehyde + NADPH + H(+). The enzyme catalyses (E)-coniferol + NADP(+) = (E)-coniferaldehyde + NADPH + H(+). It carries out the reaction (E)-sinapyl alcohol + NADP(+) = (E)-sinapaldehyde + NADPH + H(+). It catalyses the reaction (E)-4-coumaroyl alcohol + NADP(+) = (E)-4-coumaraldehyde + NADPH + H(+). The catalysed reaction is (E)-caffeyl alcohol + NADP(+) = (E)-caffeyl aldehyde + NADPH + H(+). The protein operates within aromatic compound metabolism; phenylpropanoid biosynthesis. In terms of biological role, involved in lignin biosynthesis. Catalyzes the final step specific for the production of lignin monomers. Catalyzes the NADPH-dependent reduction of coniferaldehyde, 5-hydroxyconiferaldehyde, sinapaldehyde, 4-coumaraldehyde and caffeyl aldehyde to their respective alcohols. The polypeptide is Probable cinnamyl alcohol dehydrogenase 9 (Oryza sativa subsp. japonica (Rice)).